The sequence spans 81 residues: Cytochrome c oxidase subunit 7B2, mitochondrial (81 aa).

Residues 1 to 25 (MMFPLARNALSSLKIRSILQSMARQ) constitute a mitochondrion transit peptide. Over 26 to 33 (SHVKHSPD) the chain is Mitochondrial matrix. A helical transmembrane segment spans residues 34–60 (FHDKYGNAVLASGTAFCVVAWVFTATQ). Residues 61–81 (IGIEWNLSPVGRVTPKEWKHQ) are Mitochondrial intermembrane-facing.

It belongs to the cytochrome c oxidase VIIb family. In terms of assembly, component of the cytochrome c oxidase (complex IV, CIV), a multisubunit enzyme composed of 14 subunits. The complex is composed of a catalytic core of 3 subunits MT-CO1, MT-CO2 and MT-CO3, encoded in the mitochondrial DNA, and 11 supernumerary subunits COX4I, COX5A, COX5B, COX6A, COX6B, COX6C, COX7A, COX7B, COX7C, COX8 and NDUFA4, which are encoded in the nuclear genome. The complex exists as a monomer or a dimer and forms supercomplexes (SCs) in the inner mitochondrial membrane with NADH-ubiquinone oxidoreductase (complex I, CI) and ubiquinol-cytochrome c oxidoreductase (cytochrome b-c1 complex, complex III, CIII), resulting in different assemblies (supercomplex SCI(1)III(2)IV(1) and megacomplex MCI(2)III(2)IV(2)).

The protein localises to the mitochondrion inner membrane. It functions in the pathway energy metabolism; oxidative phosphorylation. In terms of biological role, component of the cytochrome c oxidase, the last enzyme in the mitochondrial electron transport chain which drives oxidative phosphorylation. The respiratory chain contains 3 multisubunit complexes succinate dehydrogenase (complex II, CII), ubiquinol-cytochrome c oxidoreductase (cytochrome b-c1 complex, complex III, CIII) and cytochrome c oxidase (complex IV, CIV), that cooperate to transfer electrons derived from NADH and succinate to molecular oxygen, creating an electrochemical gradient over the inner membrane that drives transmembrane transport and the ATP synthase. Cytochrome c oxidase is the component of the respiratory chain that catalyzes the reduction of oxygen to water. Electrons originating from reduced cytochrome c in the intermembrane space (IMS) are transferred via the dinuclear copper A center (CU(A)) of subunit 2 and heme A of subunit 1 to the active site in subunit 1, a binuclear center (BNC) formed by heme A3 and copper B (CU(B)). The BNC reduces molecular oxygen to 2 water molecules using 4 electrons from cytochrome c in the IMS and 4 protons from the mitochondrial matrix. The chain is Cytochrome c oxidase subunit 7B2, mitochondrial (COX7B2) from Macaca fascicularis (Crab-eating macaque).